The sequence spans 405 residues: Probable tRNA sulfurtransferase (405 aa).

In terms of domain architecture, THUMP spans 60-165 (DQVMARLSQV…REAIYLSTKT (106 aa)). ATP is bound by residues 183 to 184 (ML), 208 to 209 (HF), Arg265, Gly287, and Gln296.

It belongs to the ThiI family.

It localises to the cytoplasm. It catalyses the reaction [ThiI sulfur-carrier protein]-S-sulfanyl-L-cysteine + a uridine in tRNA + 2 reduced [2Fe-2S]-[ferredoxin] + ATP + H(+) = [ThiI sulfur-carrier protein]-L-cysteine + a 4-thiouridine in tRNA + 2 oxidized [2Fe-2S]-[ferredoxin] + AMP + diphosphate. The enzyme catalyses [ThiS sulfur-carrier protein]-C-terminal Gly-Gly-AMP + S-sulfanyl-L-cysteinyl-[cysteine desulfurase] + AH2 = [ThiS sulfur-carrier protein]-C-terminal-Gly-aminoethanethioate + L-cysteinyl-[cysteine desulfurase] + A + AMP + 2 H(+). Its pathway is cofactor biosynthesis; thiamine diphosphate biosynthesis. Functionally, catalyzes the ATP-dependent transfer of a sulfur to tRNA to produce 4-thiouridine in position 8 of tRNAs, which functions as a near-UV photosensor. Also catalyzes the transfer of sulfur to the sulfur carrier protein ThiS, forming ThiS-thiocarboxylate. This is a step in the synthesis of thiazole, in the thiamine biosynthesis pathway. The sulfur is donated as persulfide by IscS. This Lacticaseibacillus paracasei (strain ATCC 334 / BCRC 17002 / CCUG 31169 / CIP 107868 / KCTC 3260 / NRRL B-441) (Lactobacillus paracasei) protein is Probable tRNA sulfurtransferase.